The chain runs to 766 residues: Serine/threonine-protein kinase DCLK2 (766 aa).

Residues M1–I45 are disordered. The span at I7–P19 shows a compositional bias: basic and acidic residues. Residues R24 to P39 are compositionally biased toward low complexity. The residue at position 61 (T61) is a Phosphothreonine. 2 consecutive Doublecortin domains span residues K72–T158 and K197–D280. Composition is skewed to low complexity over residues A300–S312 and T324–S347. The tract at residues A300–G378 is disordered. Phosphoserine is present on S362. Positions Y394 to V651 constitute a Protein kinase domain. ATP-binding positions include I400–V408 and K423. The active-site Proton acceptor is D515. Phosphoserine is present on S647. T666 is modified (phosphothreonine). Residues C707–D766 are disordered. The span at S724 to P736 shows a compositional bias: low complexity. Residues A737 to A752 show a composition bias toward pro residues.

It belongs to the protein kinase superfamily. CAMK Ser/Thr protein kinase family. CaMK subfamily. In terms of assembly, binds to and stabilizes microtubules. Interacts with MAPK8IP1/JIP-1, MAPK8IP2/JIP-2, MAPK9/JNK2, PPP1R9B/NEURABIN-2 and actin. Autophosphorylated. In terms of tissue distribution, expressed in the brain, heart and eyes.

The protein localises to the cytoplasm. Its subcellular location is the cytoskeleton. It catalyses the reaction L-seryl-[protein] + ATP = O-phospho-L-seryl-[protein] + ADP + H(+). It carries out the reaction L-threonyl-[protein] + ATP = O-phospho-L-threonyl-[protein] + ADP + H(+). Protein kinase with a significantly reduced C(a2+)/CAM affinity and dependence compared to other members of the CaMK family. May play a role in the down-regulation of CRE-dependent gene activation probably by phosphorylation of the CREB coactivator CRTC2/TORC2 and the resulting retention of TORC2 in the cytoplasm. This Homo sapiens (Human) protein is Serine/threonine-protein kinase DCLK2 (DCLK2).